The chain runs to 1020 residues: FERM domain-containing protein 4A (1020 aa).

Residues 5–307 form the FERM domain; it reads RRCQVHLLDD…SQHQFYLDRK (303 aa). Residues 343–405 are necessary for interaction with CYTH1; the sequence is KGKIISGSSG…RLCLREAELT (63 aa). Low complexity predominate over residues 351-367; that stretch reads SGSLLSSGSQESDSSQS. The segment at 351 to 371 is disordered; that stretch reads SGSLLSSGSQESDSSQSAKKD. A coiled-coil region spans residues 367-401; that stretch reads SAKKDMLAALKSRQEALEETLRQRLEELKRLCLRE. At serine 515 the chain carries Phosphoserine. Residues 538–665 form a disordered region; it reads DEDSQVTSTI…MPSTPDLRVR (128 aa). The segment covering 542–551 has biased composition (polar residues); sequence QVTSTISPLQ. Positions 556–572 are enriched in pro residues; sequence GLPPRPPSSHNRPPPPQ. The segment at 565–920 is necessary for tight junction and adherens junction localization; Requires for interaction with PARD3; it reads HNRPPPPQSL…QWYQRSTASH (356 aa). 2 positions are modified to phosphoserine: serine 590 and serine 601. The segment covering 609–624 has biased composition (basic residues); it reads VKKRSSHGHSSSHKRF. Residues 626 to 658 show a composition bias toward polar residues; it reads STGSCTEAGVSSSLQNSPIRSLPHWNSQSSMPS. 2 positions are modified to phosphoserine: serine 666 and serine 696. Disordered stretches follow at residues 698 to 741 and 757 to 810; these read ESQG…HSSS and AEDS…QSQP. Over residues 773-796 the composition is skewed to low complexity; that stretch reads RAAGALGSASSGSMPNLAARSGAA. Serine 785, serine 854, and serine 882 each carry phosphoserine. 2 disordered regions span residues 862–949 and 961–1020; these read KESW…STFV and CKAT…STDE. The span at 893 to 910 shows a compositional bias: basic and acidic residues; that stretch reads DGAHDKGSGRAAVSDELR. Residues 927–947 show a composition bias toward low complexity; the sequence is SHTSSTSSDSGSQYSTSSQST. 3 stretches are compositionally biased toward polar residues: residues 967 to 981, 994 to 1004, and 1011 to 1020; these read ALPQ…SSEI, TWQTGEATENS, and ESPTHQSTDE.

Interacts (via coiled-coil domain) with CYTH1 (via coiled-coil domain). Interacts with PARD3 (via coiled-coil domain). Found in a complex with PARD3, CYTH1 and FRMD4A. Interacts with CYTH2. Interacts with CYTH3.

Its subcellular location is the cytoplasm. The protein resides in the cytoskeleton. The protein localises to the cell junction. It localises to the adherens junction. It is found in the tight junction. Scaffolding protein that regulates epithelial cell polarity by connecting ARF6 activation with the PAR3 complex. Plays a redundant role with FRMD4B in epithelial polarization. May regulate MAPT secretion by activating ARF6-signaling. The polypeptide is FERM domain-containing protein 4A (Frmd4a) (Mus musculus (Mouse)).